The primary structure comprises 928 residues: MPPKTPRKTAATAAAAAAEPPAPPPPPPPEEDPEQDSGPEDLPLVRLEFEETEEPDFTALCQKLKIPDHVRERAWLTWEKVSSVDGVLGGYIQKKKELWGICIFIAAVDLDEMSFTFTELQKNIEISVHKFFNLLKEIDTSTKVDNAMSRLLKKYDVLFALFSKLERTCELIYLTQPSSSISTEINSALVLKVSWITFLLAKGEVLQMEDDLVISFQLMLCVLDYFIKLSPPMLLKEPYKTAVIPINGSPRTPRRGQNRSARIAKQLENDTRIIEVLCKEHECNIDEVKNVYFKNFIPFMNSLGLVTSNGLPEVENLSKRYEEIYLKNKDLDARLFLDHDKTLQTDSIDSFETQRTPRKSNLDEEVNVIPPHTPVRTVMNTIQQLMMILNSASDQPSENLISYFNNCTVNPKESILKRVKDIGYIFKEKFAKAVGQGCVEIGSQRYKLGVRLYYRVMESMLKSEEERLSIQNFSKLLNDNIFHMSLLACALEVVMATYSRSTSQNLDSGTDLSFPWILNVLNLKAFDFYKVIESFIKAEGNLTREMIKHLERCEHRIMESLAWLSDSPLFDLIKQSKDREGPTDHLESACPLNLPLQNNHTAADMYLSPVRSPKKKGSTTRVNSTANAETQATSAFQTQKPLKSTSLSLFYKKVYRLAYLRLNTLCERLLSEHPELEHIIWTLFQHTLQNEYELMRDRHLDQIMMCSMYGICKVKNIDLKFKIIVTAYKDLPHAVQETFKRVLIKEEEYDSIIVFYNSVFMQRLKTNILQYASTRPPTLSPIPHIPRSPYKFPSSPLRIPGGNIYISPLKSPYKISEGLPTPTKMTPRSRILVSIGESFGTSEKFQKINQMVCNSDRVLKRSAEGSNPPKPLKKLRFDIEGSDEADGSKHLPGESKFQQKLAEMTSTRTRMQKQKMNDSMDTSNKEEK.

Residues 1–42 (MPPKTPRKTAATAAAAAAEPPAPPPPPPPEEDPEQDSGPEDL) are disordered. Pro-2 bears the N,N-dimethylproline mark. Positions 8–19 (KTAATAAAAAAE) are enriched in low complexity. The span at 29–39 (PEEDPEQDSGP) shows a compositional bias: acidic residues. The residue at position 37 (Ser-37) is a Phosphoserine. Phosphoserine; by CDK1 is present on Ser-249. Thr-252 is modified (phosphothreonine; by CDK1). Position 356 is a phosphothreonine (Thr-356). Residue Thr-373 is modified to Phosphothreonine; by CDK1. The interval 373–579 (TPVRTVMNTI…FDLIKQSKDR (207 aa)) is domain A. The pocket; binds T and E1A stretch occupies residues 373–771 (TPVRTVMNTI…QRLKTNILQY (399 aa)). Ser-567 bears the Phosphoserine; by CDK2 mark. The tract at residues 580 to 639 (EGPTDHLESACPLNLPLQNNHTAADMYLSPVRSPKKKGSTTRVNSTANAETQATSAFQTQ) is spacer. Ser-608 bears the Phosphoserine mark. A disordered region spans residues 610–632 (VRSPKKKGSTTRVNSTANAETQA). Ser-612 carries the post-translational modification Phosphoserine; by CHEK2 and CHEK1. Polar residues predominate over residues 619 to 632 (TTRVNSTANAETQA). Residue Ser-624 is modified to Phosphoserine. The tract at residues 640-771 (KPLKSTSLSL…QRLKTNILQY (132 aa)) is domain B. Residues 763 to 928 (RLKTNILQYA…SMDTSNKEEK (166 aa)) form an interaction with LIMD1 region. The interval 771–928 (YASTRPPTLS…SMDTSNKEEK (158 aa)) is domain C; mediates interaction with E4F1. Phosphoserine occurs at positions 780, 788, and 795. The residue at position 807 (Ser-807) is a Phosphoserine; by CDK1 and CDK3. Lys-810 bears the N6-methyllysine; by SMYD2 mark. The residue at position 811 (Ser-811) is a Phosphoserine; by CDK1 and CDK3. The residue at position 821 (Thr-821) is a Phosphothreonine; by CDK6. Thr-823 carries the post-translational modification Phosphothreonine. The residue at position 826 (Thr-826) is a Phosphothreonine; by CDK4. Thr-841 bears the Phosphothreonine mark. Ser-855 carries the phosphoserine modification. Lys-860 bears the N6-methyllysine; by SMYD2 mark. Positions 860–876 (KRSAEGSNPPKPLKKLR) match the Bipartite nuclear localization signal motif. Residues 860 to 928 (KRSAEGSNPP…SMDTSNKEEK (69 aa)) form a disordered region. Residues Lys-873 and Lys-874 each carry the N6-acetyllysine; by PCAF modification. Residues 915–928 (KMNDSMDTSNKEEK) show a composition bias toward basic and acidic residues.

Belongs to the retinoblastoma protein (RB) family. In terms of assembly, the hypophosphorylated form interacts with and sequesters the E2F1 transcription factor, thereby inhibiting E2F1 transcription. Interacts with heterodimeric E2F/DP transcription factor complexes containing TFDP1 and either E2F1, E2F3, E2F4 or E2F5, or TFDP2 and E2F4. Interacts (when hyperphosphorylated and hypophosphorylated) with PKP3; the interaction inhibits RB1 interaction with and repression of the transcription factor E2F1, potentially via sequestering RB1 to the cytoplasm. The unphosphorylated form interacts with EID1, ARID3B, KDM5A, SUV39H1, MJD2A/JHDM3A and THOC1. Interacts with the N-terminal domain of TAF1. Interacts with SNW1, ATAD5, AATF, DNMT1, LIN9, LMNA, KMT5B, KMT5C, PELP1, UHRF2 and TMPO-alpha. Interacts with GRIP1 and UBR4. Interacts with ARID4A and KDM5B. Interacts with E4F1 and LIMD1. Interacts with SMARCA4/BRG1 and HDAC1. Interacts with PSMA3 and USP4. Interacts (when methylated at Lys-860) with L3MBTL1. Interacts with CHEK2; phosphorylates RB1. Interacts with CDK1 and CDK2. Interacts with PRMT2. Interacts with CEBPA. P-TEFB complex interacts with RB1; promotes phosphorylation of RB1. Interacts with RBBP9; the interaction disrupts RB1 binding to E2F1. Interacts with KAT2B/PCAF and EP300/P300. Interacts with PAX5. Interacts (phosphorylated and unphosphorylated) with BLCAP. May interact with NDC80. (Microbial infection) Interacts with adenovirus E1A protein. As to quaternary structure, (Microbial infection) Interacts with HPV E7 protein. In terms of assembly, (Microbial infection) Interacts with SV40 large T antigen. (Microbial infection) Interacts with human cytomegalovirus/HHV-5 proteins UL82 and UL123. As to quaternary structure, (Microbial infection) Interacts with molluscum contagiosum virus protein MC007. Post-translationally, phosphorylated by CDK6 and CDK4, and subsequently by CDK2 at Ser-567 in G1, thereby releasing E2F1 which is then able to activate cell growth. Dephosphorylated at the late M phase. SV40 large T antigen, HPV E7 and adenovirus E1A bind to the underphosphorylated, active form of pRb. Phosphorylation at Thr-821 and Thr-826 promotes interaction between the C-terminal domain C and the Pocket domain, and thereby inhibits interactions with heterodimeric E2F/DP transcription factor complexes. Dephosphorylated at Ser-795 by calcineruin upon calcium stimulation. CDK3/cyclin-C-mediated phosphorylation at Ser-807 and Ser-811 is required for G0-G1 transition. Phosphorylated by CDK1 and CDK2 upon TGFB1-mediated apoptosis. In terms of processing, N-terminus is methylated by METTL11A/NTM1. Monomethylation at Lys-810 by SMYD2 enhances phosphorylation at Ser-807 and Ser-811, and promotes cell cycle progression. Monomethylation at Lys-860 by SMYD2 promotes interaction with L3MBTL1. Acetylated during keratinocyte differentiation. Acetylation at Lys-873 and Lys-874 regulates subcellular localization. Can be deacetylated by SIRT1. Expressed in the retina. Expressed in foreskin keratinocytes (at protein level).

It localises to the nucleus. The protein localises to the cytoplasm. Functionally, tumor suppressor that is a key regulator of the G1/S transition of the cell cycle. The hypophosphorylated form binds transcription regulators of the E2F family, preventing transcription of E2F-responsive genes. Both physically blocks E2Fs transactivating domain and recruits chromatin-modifying enzymes that actively repress transcription. Cyclin and CDK-dependent phosphorylation of RB1 induces its dissociation from E2Fs, thereby activating transcription of E2F responsive genes and triggering entry into S phase. RB1 also promotes the G0-G1 transition upon phosphorylation and activation by CDK3/cyclin-C. Directly involved in heterochromatin formation by maintaining overall chromatin structure and, in particular, that of constitutive heterochromatin by stabilizing histone methylation. Recruits and targets histone methyltransferases SUV39H1, KMT5B and KMT5C, leading to epigenetic transcriptional repression. Controls histone H4 'Lys-20' trimethylation. Inhibits the intrinsic kinase activity of TAF1. Mediates transcriptional repression by SMARCA4/BRG1 by recruiting a histone deacetylase (HDAC) complex to the c-FOS promoter. In resting neurons, transcription of the c-FOS promoter is inhibited by BRG1-dependent recruitment of a phospho-RB1-HDAC1 repressor complex. Upon calcium influx, RB1 is dephosphorylated by calcineurin, which leads to release of the repressor complex. (Microbial infection) In case of viral infections, interactions with SV40 large T antigen, HPV E7 protein or adenovirus E1A protein induce the disassembly of RB1-E2F1 complex thereby disrupting RB1's activity. The polypeptide is Retinoblastoma-associated protein (RB1) (Homo sapiens (Human)).